The following is a 393-amino-acid chain: Ig gamma-1 chain C region, membrane-bound form (393 aa).

Residues 1–97 (AKTTPPSVYP…ASSTKVDKKI (97 aa)) form a CH1 region. Cysteine 27 and cysteine 82 are oxidised to a cystine. The hinge stretch occupies residues 98–110 (VPRDCGCKPCICT). The segment at 111-217 (VPEVSSVFIF…PIEKTISKTK (107 aa)) is CH2. Intrachain disulfides connect cysteine 138–cysteine 198 and cysteine 244–cysteine 302. An N-linked (GlcNAc...) asparagine glycan is attached at asparagine 174. Positions 218–324 (GRPKAPQVYT…EKSLSHSPGL (107 aa)) are CH3. A helical membrane pass occupies residues 340-357 (GLWTTITIFISLFLLSVC). At 358–393 (YSAAVTLFKVKWIFSSVVELKQTLVPEYKNMIGQAP) the chain is on the cytoplasmic side.

It localises to the cell membrane. The polypeptide is Ig gamma-1 chain C region, membrane-bound form (Ighg1) (Mus musculus (Mouse)).